A 297-amino-acid polypeptide reads, in one-letter code: Protoheme IX farnesyltransferase (297 aa).

The next 9 helical transmembrane spans lie at 23 to 43, 49 to 69, 93 to 113, 117 to 137, 144 to 164, 171 to 191, 215 to 235, 238 to 258, and 275 to 295; these read VTQL…PGMP, VFGT…NCLI, IQVL…LYHL, LTMW…TVIL, NIVI…AAVA, AWVL…ALAL, RLHI…PYAI, SGAL…WYAW, and FSIL…WVGL.

It belongs to the UbiA prenyltransferase family. Protoheme IX farnesyltransferase subfamily.

It is found in the cell inner membrane. It catalyses the reaction heme b + (2E,6E)-farnesyl diphosphate + H2O = Fe(II)-heme o + diphosphate. It functions in the pathway porphyrin-containing compound metabolism; heme O biosynthesis; heme O from protoheme: step 1/1. Functionally, converts heme B (protoheme IX) to heme O by substitution of the vinyl group on carbon 2 of heme B porphyrin ring with a hydroxyethyl farnesyl side group. This Bordetella pertussis (strain Tohama I / ATCC BAA-589 / NCTC 13251) protein is Protoheme IX farnesyltransferase.